The sequence spans 440 residues: Thymidine phosphorylase (440 aa).

Belongs to the thymidine/pyrimidine-nucleoside phosphorylase family. As to quaternary structure, homodimer.

The enzyme catalyses thymidine + phosphate = 2-deoxy-alpha-D-ribose 1-phosphate + thymine. The protein operates within pyrimidine metabolism; dTMP biosynthesis via salvage pathway; dTMP from thymine: step 1/2. In terms of biological role, the enzymes which catalyze the reversible phosphorolysis of pyrimidine nucleosides are involved in the degradation of these compounds and in their utilization as carbon and energy sources, or in the rescue of pyrimidine bases for nucleotide synthesis. This is Thymidine phosphorylase from Serratia proteamaculans (strain 568).